The primary structure comprises 57 residues: MKPRVFFLLFLLVAAMIETGESEENEEGSNESGKSTEAKNTDASVDNEDSDIDGDSD.

A signal peptide spans 1 to 22; the sequence is MKPRVFFLLFLLVAAMIETGES. Acidic residues-rich tracts occupy residues 20–29 and 45–57; these read GESEENEEGS and VDNEDSDIDGDSD. The disordered stretch occupies residues 20-57; sequence GESEENEEGSNESGKSTEAKNTDASVDNEDSDIDGDSD.

It belongs to the non-disulfide-bridged peptide (NDBP) superfamily. In terms of tissue distribution, expressed by the venom gland.

The protein resides in the secreted. The polypeptide is Peptide BmKa1 (Olivierus martensii (Manchurian scorpion)).